A 170-amino-acid chain; its full sequence is uncharacterized protein (170 aa).

This is an uncharacterized protein from Acidianus convivator (ATV).